A 464-amino-acid chain; its full sequence is Protein FAM90A1 (464 aa).

Disordered regions lie at residues 1 to 43, 71 to 294, 312 to 386, 412 to 437, and 445 to 464; these read MMAR…PRLK, PNFG…KRSA, PFQI…AASH, PSFH…SEGP, and VLYE…SDLE. Composition is skewed to basic and acidic residues over residues 74–83 and 97–114; these read GEKEGKENLK and NKDK…DPQR. The segment covering 180-197 has biased composition (low complexity); the sequence is LASLSPLRKASLSSSSSL. A compositionally biased stretch (polar residues) spans 344–355; the sequence is TSPQTGTRTPAQ.

The protein belongs to the FAM90 family.

This Homo sapiens (Human) protein is Protein FAM90A1 (FAM90A1).